Here is a 310-residue protein sequence, read N- to C-terminus: Manganese ABC transporter substrate-binding lipoprotein PsaA (310 aa).

Residues 1–20 (MKKIASVLALFVALLFGLLA) form the signal peptide. The N-palmitoyl cysteine moiety is linked to residue Cys-21. Cys-21 is lipidated: S-diacylglycerol cysteine. Residues His-68, His-140, Glu-206, and Asp-281 each contribute to the Mn(2+) site.

This sequence belongs to the bacterial solute-binding protein 9 family. Lipoprotein receptor antigen (Lrai) subfamily.

It localises to the cell membrane. In terms of biological role, part of the ATP-binding cassette (ABC) transport system PsaABC involved in manganese import. Binds manganese with high affinity and specificity and delivers it to the membrane permease for translocation into the cytoplasm. Also acts as an adhesin which is involved on adherence to extracellular matrix. In Streptococcus pneumoniae, this protein is Manganese ABC transporter substrate-binding lipoprotein PsaA.